Reading from the N-terminus, the 208-residue chain is Imidazole glycerol phosphate synthase subunit HisH (208 aa).

The region spanning 2 to 208 (NVTIVDYNSG…LKIIENFLNL (207 aa)) is the Glutamine amidotransferase type-1 domain. The active-site Nucleophile is cysteine 85. Active-site residues include histidine 190 and glutamate 192.

As to quaternary structure, heterodimer of HisH and HisF.

It is found in the cytoplasm. It catalyses the reaction 5-[(5-phospho-1-deoxy-D-ribulos-1-ylimino)methylamino]-1-(5-phospho-beta-D-ribosyl)imidazole-4-carboxamide + L-glutamine = D-erythro-1-(imidazol-4-yl)glycerol 3-phosphate + 5-amino-1-(5-phospho-beta-D-ribosyl)imidazole-4-carboxamide + L-glutamate + H(+). It carries out the reaction L-glutamine + H2O = L-glutamate + NH4(+). Its pathway is amino-acid biosynthesis; L-histidine biosynthesis; L-histidine from 5-phospho-alpha-D-ribose 1-diphosphate: step 5/9. Functionally, IGPS catalyzes the conversion of PRFAR and glutamine to IGP, AICAR and glutamate. The HisH subunit catalyzes the hydrolysis of glutamine to glutamate and ammonia as part of the synthesis of IGP and AICAR. The resulting ammonia molecule is channeled to the active site of HisF. The polypeptide is Imidazole glycerol phosphate synthase subunit HisH (Pelagibacter ubique (strain HTCC1062)).